Here is a 407-residue protein sequence, read N- to C-terminus: D-inositol 3-phosphate glycosyltransferase (407 aa).

Residue H2 coordinates 1D-myo-inositol 3-phosphate. UDP-N-acetyl-alpha-D-glucosamine is bound by residues 8–9 (QP) and G16. 1D-myo-inositol 3-phosphate contacts are provided by residues 13 to 18 (DAGGLN), R71, Y104, T128, and R148. UDP-N-acetyl-alpha-D-glucosamine-binding residues include R222 and K227. Mg(2+) is bound by residues Y297, R298, and A300. The UDP-N-acetyl-alpha-D-glucosamine site is built by E310 and E318. T324 contributes to the Mg(2+) binding site.

It belongs to the glycosyltransferase group 1 family. MshA subfamily. Homodimer.

The enzyme catalyses 1D-myo-inositol 3-phosphate + UDP-N-acetyl-alpha-D-glucosamine = 1D-myo-inositol 2-acetamido-2-deoxy-alpha-D-glucopyranoside 3-phosphate + UDP + H(+). Its function is as follows. Catalyzes the transfer of a N-acetyl-glucosamine moiety to 1D-myo-inositol 3-phosphate to produce 1D-myo-inositol 2-acetamido-2-deoxy-glucopyranoside 3-phosphate in the mycothiol biosynthesis pathway. In Frankia alni (strain DSM 45986 / CECT 9034 / ACN14a), this protein is D-inositol 3-phosphate glycosyltransferase.